Consider the following 176-residue polypeptide: Glutathione-regulated potassium-efflux system ancillary protein KefF (176 aa).

FMN is bound by residues histidine 8, 14-17 (SHAN), 65-68 (MQWY), and 105-108 (TTGG).

Belongs to the NAD(P)H dehydrogenase (quinone) family. KefF subfamily. As to quaternary structure, homodimer. Interacts with KefC. The cofactor is FMN.

The protein localises to the cell inner membrane. It catalyses the reaction a quinone + NADH + H(+) = a quinol + NAD(+). It carries out the reaction a quinone + NADPH + H(+) = a quinol + NADP(+). Functionally, regulatory subunit of a potassium efflux system that confers protection against electrophiles. Required for full activity of KefC. Shows redox enzymatic activity, but this enzymatic activity is not required for activation of KefC. This Salmonella dublin (strain CT_02021853) protein is Glutathione-regulated potassium-efflux system ancillary protein KefF.